The primary structure comprises 883 residues: Valine--tRNA ligase (883 aa).

The 'HIGH' region signature appears at 46–56; sequence PNVTGKLHLGH. The short motif at 520-524 is the 'KMSKS' region element; sequence KMSKS. Residue lysine 523 participates in ATP binding. Positions 809 to 844 form a coiled coil; that stretch reads LADLLNVEEELARLEKELAKWQKELDMVGKKLSNER.

The protein belongs to the class-I aminoacyl-tRNA synthetase family. ValS type 1 subfamily. As to quaternary structure, monomer.

It localises to the cytoplasm. It catalyses the reaction tRNA(Val) + L-valine + ATP = L-valyl-tRNA(Val) + AMP + diphosphate. Its function is as follows. Catalyzes the attachment of valine to tRNA(Val). As ValRS can inadvertently accommodate and process structurally similar amino acids such as threonine, to avoid such errors, it has a 'posttransfer' editing activity that hydrolyzes mischarged Thr-tRNA(Val) in a tRNA-dependent manner. This is Valine--tRNA ligase from Streptococcus agalactiae serotype V (strain ATCC BAA-611 / 2603 V/R).